Reading from the N-terminus, the 348-residue chain is Protein RecA (348 aa).

67–74 serves as a coordination point for ATP; that stretch reads GPESSGKT.

Belongs to the RecA family.

It is found in the cytoplasm. Its function is as follows. Can catalyze the hydrolysis of ATP in the presence of single-stranded DNA, the ATP-dependent uptake of single-stranded DNA by duplex DNA, and the ATP-dependent hybridization of homologous single-stranded DNAs. It interacts with LexA causing its activation and leading to its autocatalytic cleavage. In Kineococcus radiotolerans (strain ATCC BAA-149 / DSM 14245 / SRS30216), this protein is Protein RecA.